Consider the following 839-residue polypeptide: Probable beta-glucosidase I (839 aa).

N197 carries N-linked (GlcNAc...) asparagine glycosylation. Residue D225 is part of the active site. Positions 395-555 (DGKTGFSFKV…GQEELISNAV (161 aa)) constitute a PA14 domain. N620 carries N-linked (GlcNAc...) asparagine glycosylation.

Belongs to the glycosyl hydrolase 3 family.

The protein localises to the secreted. It carries out the reaction Hydrolysis of terminal, non-reducing beta-D-glucosyl residues with release of beta-D-glucose.. The protein operates within glycan metabolism; cellulose degradation. Functionally, beta-glucosidases are one of a number of cellulolytic enzymes involved in the degradation of cellulosic biomass. Catalyzes the last step releasing glucose from the inhibitory cellobiose. The sequence is that of Probable beta-glucosidase I (bglI) from Aspergillus flavus (strain ATCC 200026 / FGSC A1120 / IAM 13836 / NRRL 3357 / JCM 12722 / SRRC 167).